We begin with the raw amino-acid sequence, 155 residues long: Ribosomal RNA large subunit methyltransferase H (155 aa).

S-adenosyl-L-methionine contacts are provided by residues Leu72, Gly103, and 122–127 (LSALTL).

Belongs to the RNA methyltransferase RlmH family. As to quaternary structure, homodimer.

It is found in the cytoplasm. It catalyses the reaction pseudouridine(1915) in 23S rRNA + S-adenosyl-L-methionine = N(3)-methylpseudouridine(1915) in 23S rRNA + S-adenosyl-L-homocysteine + H(+). Functionally, specifically methylates the pseudouridine at position 1915 (m3Psi1915) in 23S rRNA. This Salmonella dublin (strain CT_02021853) protein is Ribosomal RNA large subunit methyltransferase H.